The primary structure comprises 159 residues: NADH-quinone oxidoreductase subunit I (159 aa).

2 consecutive 4Fe-4S ferredoxin-type domains span residues 50–80 and 90–119; these read QRRY…IESE and KRYD…ETHI. Residues Cys-60, Cys-63, Cys-66, Cys-70, Cys-99, Cys-102, Cys-105, and Cys-109 each contribute to the [4Fe-4S] cluster site.

It belongs to the complex I 23 kDa subunit family. NDH-1 is composed of 14 different subunits. Subunits NuoA, H, J, K, L, M, N constitute the membrane sector of the complex. The cofactor is [4Fe-4S] cluster.

The protein localises to the cell inner membrane. The enzyme catalyses a quinone + NADH + 5 H(+)(in) = a quinol + NAD(+) + 4 H(+)(out). Its function is as follows. NDH-1 shuttles electrons from NADH, via FMN and iron-sulfur (Fe-S) centers, to quinones in the respiratory chain. The immediate electron acceptor for the enzyme in this species is believed to be ubiquinone. Couples the redox reaction to proton translocation (for every two electrons transferred, four hydrogen ions are translocated across the cytoplasmic membrane), and thus conserves the redox energy in a proton gradient. This Neisseria meningitidis serogroup A / serotype 4A (strain DSM 15465 / Z2491) protein is NADH-quinone oxidoreductase subunit I.